A 362-amino-acid polypeptide reads, in one-letter code: sn-glycerol-3-phosphate import ATP-binding protein UgpC (362 aa).

The 232-residue stretch at 4–235 folds into the ABC transporter domain; it reads LTLQSVKKTY…PATVFVASFI (232 aa). 37 to 44 provides a ligand contact to ATP; the sequence is GPSGCGKS.

Belongs to the ABC transporter superfamily. sn-glycerol-3-phosphate importer (TC 3.A.1.1.3) family. In terms of assembly, the complex is composed of two ATP-binding proteins (UgpC), two transmembrane proteins (UgpA and UgpE) and a solute-binding protein (UgpB).

Its subcellular location is the cell inner membrane. It catalyses the reaction sn-glycerol 3-phosphate(out) + ATP + H2O = sn-glycerol 3-phosphate(in) + ADP + phosphate + H(+). Part of the ABC transporter complex UgpBAEC involved in sn-glycerol-3-phosphate (G3P) import. Responsible for energy coupling to the transport system. This Paraburkholderia xenovorans (strain LB400) protein is sn-glycerol-3-phosphate import ATP-binding protein UgpC.